Consider the following 561-residue polypeptide: Oxygen-dependent choline dehydrogenase (561 aa).

Residue 7–36 participates in FAD binding; that stretch reads DYIIVGAGSAGNVLASRLTEDADVTVLLLE. Residue His474 is the Proton acceptor of the active site.

This sequence belongs to the GMC oxidoreductase family. The cofactor is FAD.

The catalysed reaction is choline + A = betaine aldehyde + AH2. It catalyses the reaction betaine aldehyde + NAD(+) + H2O = glycine betaine + NADH + 2 H(+). It participates in amine and polyamine biosynthesis; betaine biosynthesis via choline pathway; betaine aldehyde from choline (cytochrome c reductase route): step 1/1. Involved in the biosynthesis of the osmoprotectant glycine betaine. Catalyzes the oxidation of choline to betaine aldehyde and betaine aldehyde to glycine betaine at the same rate. This chain is Oxygen-dependent choline dehydrogenase, found in Paraburkholderia phytofirmans (strain DSM 17436 / LMG 22146 / PsJN) (Burkholderia phytofirmans).